The chain runs to 455 residues: N-acetyl-S-(2-succino)cysteine lyase (455 aa).

Threonine 106–threonine 107 lines the fumarate pocket. Histidine 154 (proton donor/acceptor) is an active-site residue. Arginine 233 provides a ligand contact to fumarate. Catalysis depends on serine 277, which acts as the Proton donor/acceptor. Residues serine 278 and lysine 283–asparagine 285 contribute to the fumarate site.

It belongs to the lyase 1 family.

The enzyme catalyses N-acetyl-S-(2-succino)-L-cysteine = N-acetyl-L-cysteine + fumarate. Its pathway is amino-acid biosynthesis; L-cysteine biosynthesis. In terms of biological role, catalyzes the cleavage of N-acetyl-S-(2-succino)cysteine into fumarate and N-acetylcysteine. Is involved in a S-(2-succino)cysteine (2SC) degradation pathway that allows the bacterium to recover cysteine from 2SC and to detoxify 2SC that may be a toxic metabolite. Can also perform the reverse reaction in vitro, and has minor activity against 2SC and other small molecule thiols. This Enterococcus italicus (strain DSM 15952 / CCUG 50447 / LMG 22039 / TP 1.5) protein is N-acetyl-S-(2-succino)cysteine lyase.